A 79-amino-acid polypeptide reads, in one-letter code: RNA-binding protein Hfq (79 aa).

The region spanning 10–69 (GPFLNALRKEHVPVSIYLVNGIKLQGNIESFDQYVVLLRNTVTQMVYKHAISTVVPARAV) is the Sm domain.

It belongs to the Hfq family. In terms of assembly, homohexamer.

RNA chaperone that binds small regulatory RNA (sRNAs) and mRNAs to facilitate mRNA translational regulation in response to envelope stress, environmental stress and changes in metabolite concentrations. Also binds with high specificity to tRNAs. This chain is RNA-binding protein Hfq, found in Cupriavidus necator (strain ATCC 17699 / DSM 428 / KCTC 22496 / NCIMB 10442 / H16 / Stanier 337) (Ralstonia eutropha).